The primary structure comprises 171 residues: T-cell surface glycoprotein CD3 delta chain (171 aa).

Residues 1-21 (MEHSRFLSGLILAAFLSRVSP) form the signal peptide. Over 22–104 (YEVEMEELED…NCVELDSATL (83 aa)) the chain is Extracellular. The cysteines at positions 37 and 72 are disulfide-linked. N-linked (GlcNAc...) asparagine glycosylation is present at Asn38. Residues 105 to 125 (AGIIVTDIIATLLLALGVYCF) traverse the membrane as a helical segment. The Cytoplasmic portion of the chain corresponds to 126–171 (AGHEMGRFSRAADTQDLLRNDQLYQPLRDRNDGQYSRLGENWARNK). The ITAM domain occupies 138–166 (DTQDLLRNDQLYQPLRDRNDGQYSRLGEN). Tyr149 and Tyr160 each carry phosphotyrosine.

The TCR-CD3 complex is composed of a CD3D/CD3E and a CD3G/CD3E heterodimers that preferentially associate with TCRalpha and TCRbeta, respectively, to form TCRalpha/CD3E/CD3G and TCRbeta/CD3G/CD3E trimers. In turn, the hexamer interacts with CD3Z homodimer to form the TCR-CD3 complex. Alternatively, TCRalpha and TCRbeta can be replaced by TCRgamma and TCRdelta. Interacts with coreceptors CD4 and CD8. Post-translationally, phosphorylated on Tyr residues after T-cell receptor triggering by LCK in association with CD4/CD8. In terms of tissue distribution, CD3D is mostly present on T-lymphocytes with its TCR-CD3 partners. Present also in fetal NK-cells.

Its subcellular location is the cell membrane. In terms of biological role, part of the TCR-CD3 complex present on T-lymphocyte cell surface that plays an essential role in adaptive immune response. When antigen presenting cells (APCs) activate T-cell receptor (TCR), TCR-mediated signals are transmitted across the cell membrane by the CD3 chains CD3D, CD3E, CD3G and CD3Z. All CD3 chains contain immunoreceptor tyrosine-based activation motifs (ITAMs) in their cytoplasmic domain. Upon TCR engagement, these motifs become phosphorylated by Src family protein tyrosine kinases LCK and FYN, resulting in the activation of downstream signaling pathways. In addition of this role of signal transduction in T-cell activation, CD3D plays an essential role in thymocyte differentiation. Indeed, participates in correct intracellular TCR-CD3 complex assembly and surface expression. In absence of a functional TCR-CD3 complex, thymocytes are unable to differentiate properly. Interacts with CD4 and CD8 and thus serves to establish a functional link between the TCR and coreceptors CD4 and CD8, which is needed for activation and positive selection of CD4 or CD8 T-cells. The chain is T-cell surface glycoprotein CD3 delta chain (CD3D) from Sus scrofa (Pig).